A 244-amino-acid chain; its full sequence is Glucosamine-6-phosphate deaminase (244 aa).

The Proton acceptor; for enolization step role is filled by aspartate 67. Catalysis depends on asparagine 133, which acts as the For ring-opening step. Histidine 135 functions as the Proton acceptor; for ring-opening step in the catalytic mechanism. The active-site For ring-opening step is the glutamate 140.

Belongs to the glucosamine/galactosamine-6-phosphate isomerase family. NagB subfamily.

The enzyme catalyses alpha-D-glucosamine 6-phosphate + H2O = beta-D-fructose 6-phosphate + NH4(+). Its pathway is amino-sugar metabolism; N-acetylneuraminate degradation; D-fructose 6-phosphate from N-acetylneuraminate: step 5/5. Functionally, catalyzes the reversible isomerization-deamination of glucosamine 6-phosphate (GlcN6P) to form fructose 6-phosphate (Fru6P) and ammonium ion. This Mycoplasma mycoides subsp. mycoides SC (strain CCUG 32753 / NCTC 10114 / PG1) protein is Glucosamine-6-phosphate deaminase.